We begin with the raw amino-acid sequence, 395 residues long: Succinyl-diaminopimelate desuccinylase (395 aa).

His-74 is a Zn(2+) binding site. Asp-76 is an active-site residue. Residue Asp-107 participates in Zn(2+) binding. The active-site Proton acceptor is Glu-141. Zn(2+) contacts are provided by Glu-142, Glu-170, and His-368.

This sequence belongs to the peptidase M20A family. DapE subfamily. Homodimer. Zn(2+) serves as cofactor. Requires Co(2+) as cofactor.

It carries out the reaction N-succinyl-(2S,6S)-2,6-diaminopimelate + H2O = (2S,6S)-2,6-diaminopimelate + succinate. It functions in the pathway amino-acid biosynthesis; L-lysine biosynthesis via DAP pathway; LL-2,6-diaminopimelate from (S)-tetrahydrodipicolinate (succinylase route): step 3/3. In terms of biological role, catalyzes the hydrolysis of N-succinyl-L,L-diaminopimelic acid (SDAP), forming succinate and LL-2,6-diaminopimelate (DAP), an intermediate involved in the bacterial biosynthesis of lysine and meso-diaminopimelic acid, an essential component of bacterial cell walls. In Brucella abortus (strain S19), this protein is Succinyl-diaminopimelate desuccinylase.